Consider the following 200-residue polypeptide: Nascent polypeptide-associated complex subunit alpha (200 aa).

Residues 1 to 19 (MADPRVEELPEEEVKKTQV) are compositionally biased toward basic and acidic residues. 2 disordered regions span residues 1–54 (MADP…NEKK) and 118–165 (AAQQ…EDKD). Positions 20 to 34 (EDLDNSSDDESDIEA) are enriched in acidic residues. Positions 49–114 (SRNEKKARKA…AKIEDLNASA (66 aa)) constitute an NAC-A/B domain. Residues 127–146 (AEHDHAGHTHEHEEAGKAKE) show a composition bias toward basic and acidic residues. Acidic residues predominate over residues 147-160 (EEEEDEGEEVDAEG). A UBA domain is found at 161 to 200 (IEDKDIELVMTQANVSRKKAIKALKENDNDIVNSIMALSI).

Belongs to the NAC-alpha family. Part of the nascent polypeptide-associated complex (NAC), consisting of npc-1/egd2 and npc-2/egd1. NAC associates with ribosomes via npc-2/egd1.

The protein localises to the cytoplasm. Its subcellular location is the nucleus. Its function is as follows. Component of the nascent polypeptide-associated complex (NAC), a dynamic component of the ribosomal exit tunnel, protecting the emerging polypeptides from interaction with other cytoplasmic proteins to ensure appropriate nascent protein targeting. The NAC complex also promotes mitochondrial protein import by enhancing productive ribosome interactions with the outer mitochondrial membrane and blocks the inappropriate interaction of ribosomes translating non-secretory nascent polypeptides with translocation sites in the membrane of the endoplasmic reticulum. Npc-1/egd2 may also be involved in transcription regulation. In Neurospora crassa (strain ATCC 24698 / 74-OR23-1A / CBS 708.71 / DSM 1257 / FGSC 987), this protein is Nascent polypeptide-associated complex subunit alpha (npc-1).